We begin with the raw amino-acid sequence, 460 residues long: NADH-ubiquinone oxidoreductase chain 4 (460 aa).

13 consecutive transmembrane segments (helical) span residues 22-42 (WLWS…LSWF), 59-79 (IDPL…LMIL), 94-113 (RIYI…AFSA), 117-139 (ILFY…RWGN), 148-168 (TYFL…LLFM), 195-215 (FWWT…GVHL), 231-251 (ILAA…IIML), 258-278 (MAYP…SICL), 286-306 (MIAY…LIQT), 310-330 (FAGA…LFCL), 343-362 (LLLA…WWLL), 394-414 (ILLT…MFLM), and 436-456 (LLLT…ELIW).

This sequence belongs to the complex I subunit 4 family.

The protein resides in the mitochondrion membrane. It carries out the reaction a ubiquinone + NADH + 5 H(+)(in) = a ubiquinol + NAD(+) + 4 H(+)(out). Core subunit of the mitochondrial membrane respiratory chain NADH dehydrogenase (Complex I) that is believed to belong to the minimal assembly required for catalysis. Complex I functions in the transfer of electrons from NADH to the respiratory chain. The immediate electron acceptor for the enzyme is believed to be ubiquinone. The chain is NADH-ubiquinone oxidoreductase chain 4 (MTND4) from Scyliorhinus canicula (Small-spotted catshark).